The sequence spans 276 residues: Large ribosomal subunit protein uL2 (276 aa).

The interval 224 to 276 (VMNPVDHPHGGGEGKAPIGRKSPMTPWGKPTLGYKTRKKKNKSDKFIIRRRKK) is disordered. Basic residues predominate over residues 258–276 (KTRKKKNKSDKFIIRRRKK).

This sequence belongs to the universal ribosomal protein uL2 family. Part of the 50S ribosomal subunit. Forms a bridge to the 30S subunit in the 70S ribosome.

One of the primary rRNA binding proteins. Required for association of the 30S and 50S subunits to form the 70S ribosome, for tRNA binding and peptide bond formation. It has been suggested to have peptidyltransferase activity; this is somewhat controversial. Makes several contacts with the 16S rRNA in the 70S ribosome. The sequence is that of Large ribosomal subunit protein uL2 from Geobacillus thermodenitrificans (strain NG80-2).